The following is a 686-amino-acid chain: Methionine--tRNA ligase (686 aa).

Residues 15 to 25 carry the 'HIGH' region motif; sequence PYANGSIHLGH. Residues Cys-146, Cys-149, Cys-159, and Cys-162 each contribute to the Zn(2+) site. The 'KMSKS' region signature appears at 332–336; it reads KMSKS. Lys-335 contributes to the ATP binding site. The tRNA-binding domain maps to 585–686; the sequence is AFAAVDMRIA…EGAQPGMRVM (102 aa).

This sequence belongs to the class-I aminoacyl-tRNA synthetase family. MetG type 1 subfamily. In terms of assembly, homodimer. Zn(2+) serves as cofactor.

The protein resides in the cytoplasm. It carries out the reaction tRNA(Met) + L-methionine + ATP = L-methionyl-tRNA(Met) + AMP + diphosphate. Functionally, is required not only for elongation of protein synthesis but also for the initiation of all mRNA translation through initiator tRNA(fMet) aminoacylation. The polypeptide is Methionine--tRNA ligase (Vibrio campbellii (strain ATCC BAA-1116)).